The sequence spans 211 residues: MRIEAANLAGSLWICSVVNHGVQGVGVPSWVPDPELEGAVPKSSALSWTCWLLLEPRLIGALARLLVSSSIWPLSSESDFFFTATCNALTLVSPDEPHVGWIGQIQMWLKNQWPQRPGVFHCSSRCPPRRSSPSSQTLPRWWKYFDHSRFAAVVSPTPFATAHSTPRCAARVKRQTGRDWRGLAPPRRGPCFWPRFTVGVQPHSNQSRQRG.

This is an uncharacterized protein from Mycoplasma pneumoniae (strain ATCC 29342 / M129 / Subtype 1) (Mycoplasmoides pneumoniae).